A 245-amino-acid polypeptide reads, in one-letter code: 5-oxoprolinase subunit A (245 aa).

Belongs to the LamB/PxpA family. As to quaternary structure, forms a complex composed of PxpA, PxpB and PxpC.

The enzyme catalyses 5-oxo-L-proline + ATP + 2 H2O = L-glutamate + ADP + phosphate + H(+). Functionally, catalyzes the cleavage of 5-oxoproline to form L-glutamate coupled to the hydrolysis of ATP to ADP and inorganic phosphate. This chain is 5-oxoprolinase subunit A, found in Neisseria meningitidis serogroup A / serotype 4A (strain DSM 15465 / Z2491).